The chain runs to 1019 residues: UPF0182 protein Krad_1193 (1019 aa).

Transmembrane regions (helical) follow at residues 19-39, 61-81, 115-135, 169-189, 213-233, 264-284, and 291-311; these read GAALPTVVILVAVVIAVVVGA, LWLQVLLFTLGALLLAAAVAV, RLVVVVLSAAAGLFGGSVAMS, WLAFLVSFLTAAVVLAGIAGL, VHLASLAAAFLLLRAAGYWLD, AILALIAVVVALLFVAAAVGT, and IGTGLLVVSAIAIGGIYPWAV. 2 disordered regions span residues 897 to 934 and 977 to 1019; these read GNSGAGAGDEGAPPPTAGTPAPTDGATGGPAPDPATGD and DAAS…TPTP. Low complexity predominate over residues 977-1005; that stretch reads DAASAAEARLERSGTSGPTSSSSPSASSA. The segment covering 1006-1019 has biased composition (pro residues); that stretch reads PPVPGETPAATPTP.

It belongs to the UPF0182 family.

Its subcellular location is the cell membrane. The protein is UPF0182 protein Krad_1193 of Kineococcus radiotolerans (strain ATCC BAA-149 / DSM 14245 / SRS30216).